The primary structure comprises 450 residues: Phosphoglucosamine mutase (450 aa).

Serine 101 serves as the catalytic Phosphoserine intermediate. 4 residues coordinate Mg(2+): serine 101, aspartate 240, aspartate 242, and aspartate 244. Serine 101 carries the phosphoserine modification.

The protein belongs to the phosphohexose mutase family. Mg(2+) serves as cofactor. Post-translationally, activated by phosphorylation.

It catalyses the reaction alpha-D-glucosamine 1-phosphate = D-glucosamine 6-phosphate. Its function is as follows. Catalyzes the conversion of glucosamine-6-phosphate to glucosamine-1-phosphate. This chain is Phosphoglucosamine mutase, found in Streptococcus uberis (strain ATCC BAA-854 / 0140J).